The following is a 220-amino-acid chain: Urease accessory protein UreF (220 aa).

The protein belongs to the UreF family. As to quaternary structure, ureD, UreF and UreG form a complex that acts as a GTP-hydrolysis-dependent molecular chaperone, activating the urease apoprotein by helping to assemble the nickel containing metallocenter of UreC. The UreE protein probably delivers the nickel.

It is found in the cytoplasm. Its function is as follows. Required for maturation of urease via the functional incorporation of the urease nickel metallocenter. This is Urease accessory protein UreF from Bordetella parapertussis (strain 12822 / ATCC BAA-587 / NCTC 13253).